A 216-amino-acid polypeptide reads, in one-letter code: Probable inactive E3 ubiquitin-protein ligase SINAT6 (216 aa).

The SIAH-type zinc finger occupies 5 to 74 (INDLQVESRV…LLLHLRNDHN (70 aa)).

It belongs to the SINA (Seven in absentia) family. In terms of assembly, homodimer. Interacts with SINAT1, SINAT2, SINAT3, SINAT4 and SINAT5. Interacts with ATG6 and TRAF1A. As to expression, expressed in roots, rosette leaves, cauline leaves, guard cells and flowers.

The protein localises to the cytoplasm. The protein resides in the nucleus. Functionally, probable inactive E3 ubiquitin-protein ligase that plays a role in regulation of autophagy. Upon starvation, involved in maintaining ATG6 homeostasis by competitively associating with ATG6, a component of the autophagosome complex. Acts as a positive regulator of drought stress response. Functions as a positive regulator of abscisic acid-mediated stomatal closure. This is Probable inactive E3 ubiquitin-protein ligase SINAT6 from Arabidopsis thaliana (Mouse-ear cress).